The primary structure comprises 586 residues: Dual specificity tyrosine-phosphorylation-regulated kinase 3 (586 aa).

Residues 1-13 (MGGAARERGRKDA) show a composition bias toward basic and acidic residues. The tract at residues 1-187 (MGGAARERGR…QGVIGGPNNG (187 aa)) is disordered. The Protein kinase domain occupies 208–521 (YEVLKIIGKG…PAQALRHPWI (314 aa)). Residues 214 to 222 (IGKGSFGQV), Lys237, and 287 to 290 (FELL) contribute to the ATP site. Asp334 serves as the catalytic Proton acceptor. Position 368 is a phosphotyrosine (Tyr368). The Nuclear localization signal motif lies at 467–480 (RSRRGKKRGPPGSK).

It belongs to the protein kinase superfamily. CMGC Ser/Thr protein kinase family. MNB/DYRK subfamily. Interacts with SIRT1. It depends on Mg(2+) as a cofactor. Post-translationally, protein kinase activity is activated following autophosphorylation at Tyr-368. Ubiquitinated at anaphase by the anaphase-promoting complex (APC/C), leading to its degradation by the proteasome. In terms of tissue distribution, expressed predominantly in testis. Expressed in late pachytene spermatocytes.

The protein resides in the nucleus. The protein localises to the cytoplasm. It is found in the nucleus speckle. It localises to the cytoplasmic granule. Its subcellular location is the cytoskeleton. The protein resides in the microtubule organizing center. The protein localises to the centrosome. The enzyme catalyses L-seryl-[protein] + ATP = O-phospho-L-seryl-[protein] + ADP + H(+). It carries out the reaction L-threonyl-[protein] + ATP = O-phospho-L-threonyl-[protein] + ADP + H(+). It catalyses the reaction L-tyrosyl-[protein] + ATP = O-phospho-L-tyrosyl-[protein] + ADP + H(+). Its activity is regulated as follows. Protein kinase activity is activated following autophosphorylation at Tyr-368. In terms of biological role, dual-specificity protein kinase that promotes disassembly of several types of membraneless organelles during mitosis, such as stress granules, nuclear speckles and pericentriolar material. Dual-specificity tyrosine-regulated kinases (DYRKs) autophosphorylate a critical tyrosine residue in their activation loop and phosphorylate their substrate on serine and threonine residues. Acts as a central dissolvase of membraneless organelles during the G2-to-M transition, after the nuclear-envelope breakdown: acts by mediating phosphorylation of multiple serine and threonine residues in unstructured domains of proteins, such as SRRM1 and PCM1. Does not mediate disassembly of all membraneless organelles: disassembly of P-body and nucleolus is not regulated by DYRK3. Dissolution of membraneless organelles at the onset of mitosis is also required to release mitotic regulators, such as ZNF207, from liquid-unmixed organelles where they are sequestered and keep them dissolved during mitosis. Regulates mTORC1 by mediating the dissolution of stress granules: during stressful conditions, DYRK3 partitions from the cytosol to the stress granule, together with mTORC1 components, which prevents mTORC1 signaling. When stress signals are gone, the kinase activity of DYRK3 is required for the dissolution of stress granule and mTORC1 relocation to the cytosol: acts by mediating the phosphorylation of the mTORC1 inhibitor AKT1S1, allowing full reactivation of mTORC1 signaling. Also acts as a negative regulator of EPO-dependent erythropoiesis: may place an upper limit on red cell production during stress erythropoiesis. Inhibits cell death due to cytokine withdrawal in hematopoietic progenitor cells. Promotes cell survival upon genotoxic stress through phosphorylation of SIRT1: this in turn inhibits p53/TP53 activity and apoptosis. This Rattus norvegicus (Rat) protein is Dual specificity tyrosine-phosphorylation-regulated kinase 3.